Consider the following 492-residue polypeptide: BTB/POZ domain and ankyrin repeat-containing protein NOOT2 (492 aa).

In terms of domain architecture, BTB spans 25 to 107; sequence SDVTFQVEGR…LYSGQVSIVP (83 aa). The C2HC NPR-type zinc-finger motif lies at 113-127; it reads RPNCGERGCWHTHCT. Residues C116, C121, H123, and C126 each coordinate Zn(2+). ANK repeat units lie at residues 248–277, 278–307, 312–341, and 345–379; these read QKIR…LNLD, EALA…DVNY, AGKT…DPTV, and DGVT…KLRL. 2 disordered regions span residues 395–439 and 455–492; these read ENNA…NSIG and TQMG…SHDF. Low complexity-rich tracts occupy residues 397 to 413 and 425 to 439; these read NASN…SSAA and SSSS…NSIG. Residues 461 to 473 are compositionally biased toward basic and acidic residues; the sequence is DDNRHNNSHREAM.

It belongs to the plant 'ANKYRIN-BTB/POZ' family. 'NOOT-BOP-COCH-like' (NBCL) subfamily. As to quaternary structure, homodimer.

The protein localises to the nucleus. The protein resides in the cytoplasm. It localises to the cell membrane. It functions in the pathway protein modification; protein ubiquitination. In terms of biological role, may act as a substrate-specific adapter of an E3 ubiquitin-protein ligase complex (CUL3-RBX1-BTB) which mediates the ubiquitination and subsequent proteasomal degradation of target proteins. Transcriptional co-regulator involved in the promotion of leaf and floral meristem fate and determinacy. Required for the abscission of senescent organs, probably by regulating the cell wall disorganization in abscission zones (AZs, e.g. pulvini at the base of leaves). Involved in the coordination of the symbiotic nodule developmental program; promotes the formation of root nodules by interacting directly with APP1 to modulate the expression of the nuclear transcription factor Y subunit (NF-YA1), a key nodulin. Involved in the regulation of indeterminate nodule identity in association with NOOT1. This Medicago truncatula (Barrel medic) protein is BTB/POZ domain and ankyrin repeat-containing protein NOOT2.